Here is an 87-residue protein sequence, read N- to C-terminus: Small ribosomal subunit protein bS20 (87 aa).

Residues 1-26 form a disordered region; that stretch reads MANTAQAKKRVRQNIKQRERNSGLRS.

This sequence belongs to the bacterial ribosomal protein bS20 family.

In terms of biological role, binds directly to 16S ribosomal RNA. The polypeptide is Small ribosomal subunit protein bS20 (Nitrosomonas eutropha (strain DSM 101675 / C91 / Nm57)).